Consider the following 124-residue polypeptide: Phosphoribosyl-AMP cyclohydrolase (124 aa).

Residue aspartate 82 coordinates Mg(2+). Residue cysteine 83 coordinates Zn(2+). Mg(2+)-binding residues include aspartate 84 and aspartate 86. Residues cysteine 99 and cysteine 106 each coordinate Zn(2+).

It belongs to the PRA-CH family. Homodimer. Requires Mg(2+) as cofactor. The cofactor is Zn(2+).

It localises to the cytoplasm. The catalysed reaction is 1-(5-phospho-beta-D-ribosyl)-5'-AMP + H2O = 1-(5-phospho-beta-D-ribosyl)-5-[(5-phospho-beta-D-ribosylamino)methylideneamino]imidazole-4-carboxamide. The protein operates within amino-acid biosynthesis; L-histidine biosynthesis; L-histidine from 5-phospho-alpha-D-ribose 1-diphosphate: step 3/9. Functionally, catalyzes the hydrolysis of the adenine ring of phosphoribosyl-AMP. The sequence is that of Phosphoribosyl-AMP cyclohydrolase from Zymomonas mobilis subsp. mobilis (strain ATCC 31821 / ZM4 / CP4).